Reading from the N-terminus, the 117-residue chain is Large ribosomal subunit protein uL18 (117 aa).

It belongs to the universal ribosomal protein uL18 family. Part of the 50S ribosomal subunit; part of the 5S rRNA/L5/L18/L25 subcomplex. Contacts the 5S and 23S rRNAs.

Functionally, this is one of the proteins that bind and probably mediate the attachment of the 5S RNA into the large ribosomal subunit, where it forms part of the central protuberance. This Vibrio vulnificus (strain CMCP6) protein is Large ribosomal subunit protein uL18.